A 230-amino-acid chain; its full sequence is DNA repair protein rdl1 (230 aa).

Interacts with rlp1 and sws1.

Its subcellular location is the cytoplasm. The protein localises to the nucleus. In terms of biological role, involved in homologous recombination where it functions at an early stage of recombination in a pre-recombinogenic complex with rlp1 and sws1. Also has a role at a later stage of recombination in association with the rhp55-rhp57 complex. The polypeptide is DNA repair protein rdl1 (rdl1) (Schizosaccharomyces pombe (strain 972 / ATCC 24843) (Fission yeast)).